We begin with the raw amino-acid sequence, 463 residues long: L-seryl-tRNA(Sec) selenium transferase (463 aa).

An N6-(pyridoxal phosphate)lysine modification is found at Lys-295.

Belongs to the SelA family. In terms of assembly, homodecamer; pentamer of dimers. Binds only one seryl-tRNA(Sec) per dimer. It depends on pyridoxal 5'-phosphate as a cofactor.

Its subcellular location is the cytoplasm. The catalysed reaction is L-seryl-tRNA(Sec) + selenophosphate + H(+) = L-selenocysteinyl-tRNA(Sec) + phosphate. Its pathway is aminoacyl-tRNA biosynthesis; selenocysteinyl-tRNA(Sec) biosynthesis; selenocysteinyl-tRNA(Sec) from L-seryl-tRNA(Sec) (bacterial route): step 1/1. In terms of biological role, converts seryl-tRNA(Sec) to selenocysteinyl-tRNA(Sec) required for selenoprotein biosynthesis. The protein is L-seryl-tRNA(Sec) selenium transferase of Shigella boydii serotype 18 (strain CDC 3083-94 / BS512).